Here is a 257-residue protein sequence, read N- to C-terminus: Hydroxypyruvate/pyruvate aldolase (257 aa).

The active-site Proton acceptor is histidine 48. A divalent metal cation-binding residues include glutamate 152 and aspartate 178.

The protein belongs to the HpcH/HpaI aldolase family. Requires a divalent metal cation as cofactor.

It carries out the reaction D-glyceraldehyde + 3-hydroxypyruvate = 2-dehydro-D-gluconate. The enzyme catalyses D-glyceraldehyde + pyruvate = 2-dehydro-3-deoxy-L-galactonate. The catalysed reaction is 2-dehydro-3-deoxy-D-gluconate = D-glyceraldehyde + pyruvate. Functionally, aldolase which can catalyze in vitro the aldolisation reaction between hydroxypyruvate (HPA) or pyruvate (PA) and D-glyceraldehyde (D-GA). The condensation of hydroxypyruvate and D-glyceraldehyde produces 2-dehydro-D-gluconate as the major product. The condensation of pyruvate and D-glyceraldehyde produces 2-dehydro-3-deoxy-L-galactonate as the major product and 2-dehydro-3-deoxy-D-gluconate. The sequence is that of Hydroxypyruvate/pyruvate aldolase from Roseovarius nubinhibens (strain ATCC BAA-591 / DSM 15170 / ISM).